Reading from the N-terminus, the 314-residue chain is Malate dehydrogenase (314 aa).

NAD(+) contacts are provided by residues 11–16 (GSGNIG) and aspartate 35. 2 residues coordinate substrate: arginine 84 and arginine 90. NAD(+) contacts are provided by residues asparagine 97 and 120–122 (ITN). Residues asparagine 122 and arginine 153 each contribute to the substrate site. The active-site Proton acceptor is the histidine 177.

Belongs to the LDH/MDH superfamily. MDH type 3 family.

It carries out the reaction (S)-malate + NAD(+) = oxaloacetate + NADH + H(+). Its function is as follows. Catalyzes the reversible oxidation of malate to oxaloacetate. The chain is Malate dehydrogenase from Rickettsia conorii (strain ATCC VR-613 / Malish 7).